Here is a 380-residue protein sequence, read N- to C-terminus: Cytochrome b (380 aa).

The next 4 membrane-spanning stretches (helical) occupy residues 33–53, 77–98, 113–133, and 178–198; these read FGSL…FLAM, WLIR…YMHI, WNIG…GYVL, and FFAF…LHLL. H83 and H97 together coordinate heme b. Heme b contacts are provided by H182 and H196. H201 provides a ligand contact to a ubiquinone. Transmembrane regions (helical) follow at residues 226 to 246, 288 to 308, 320 to 340, and 347 to 367; these read YKDL…ALFA, LGGV…PILH, LTQF…WIGG, and FIII…VLSP.

It belongs to the cytochrome b family. The cytochrome bc1 complex contains 3 respiratory subunits (MT-CYB, CYC1 and UQCRFS1), 2 core proteins (UQCRC1 and UQCRC2) and probably 6 low-molecular weight proteins. Requires heme b as cofactor.

The protein localises to the mitochondrion inner membrane. In terms of biological role, component of the ubiquinol-cytochrome c reductase complex (complex III or cytochrome b-c1 complex) that is part of the mitochondrial respiratory chain. The b-c1 complex mediates electron transfer from ubiquinol to cytochrome c. Contributes to the generation of a proton gradient across the mitochondrial membrane that is then used for ATP synthesis. This is Cytochrome b (mt-cyb) from Oncorhynchus keta (Chum salmon).